We begin with the raw amino-acid sequence, 616 residues long: Telomeric repeat-binding factor 2-interacting protein 1 (616 aa).

Residues 15–98 (FLDPGGQSMR…QQLDPNDYAI (84 aa)) enclose the BRCT domain. The region spanning 112 to 169 (NQGSGRLGYSSEEDAAILKFIEKRQQDAKGNLVWKEMEKRHVTEHSWQSMKDRFLKHL) is the Myb-like domain. The disordered stretch occupies residues 174 to 518 (ADKPTKKSPI…CSHIRETPEE (345 aa)). Low complexity predominate over residues 232-245 (PERASSPPEEPQAA). Polar residues predominate over residues 246 to 255 (GQPSQASSND). Basic and acidic residues-rich tracts occupy residues 271–288 (ENPRLDEDAPDASNEHSS) and 344–358 (RSSRLEENPDRRDIP). Polar residues-rich tracts occupy residues 363–382 (EQSSPNKSQMTSKISTSDSG) and 397–415 (NANSSPSKTRQTNSEASTP). The span at 431–444 (EDSDVMDDSEECEN) shows a compositional bias: acidic residues. A compositionally biased stretch (basic and acidic residues) spans 468–480 (REPESQAEHHEET). Positions 597–613 (SKFGEEEVTRRKSFLAT) match the Nuclear localization signal motif.

It belongs to the RAP1 family. In terms of assembly, homodimer. Component of the shelterin complex (telosome). Interacts with terf2; the interaction is direct.

The protein localises to the nucleus. The protein resides in the chromosome. It is found in the telomere. Acts both as a regulator of telomere function and as a transcription regulator. Involved in the regulation of telomere length and protection as a component of the shelterin complex (telosome). Does not bind DNA directly: recruited to telomeric double-stranded 5'-TTAGGG-3' repeats via its interaction with terf2. Independently of its function in telomeres, also acts as a transcription regulator: recruited to extratelomeric 5'-TTAGGG-3' sites via its association with terf2 or other factors, and regulates gene expression. This chain is Telomeric repeat-binding factor 2-interacting protein 1 (terf2ip), found in Danio rerio (Zebrafish).